The primary structure comprises 384 residues: MKIRILVLILCALTQGCTYVDDYMLGKDNTPQPKELKEIQPKVKMAQSWTTPVGKAHKTNEYLNIKPAIRGDVIYTADASGLVQAVNRKDGQIKWSTALKNNIVSGPTVAAGYVAVGTNASTLVLLNQSDGKEIWQNKVSAEVLAPPAISHQKVIAKTIDGKVYAIDAVNGKQLWVADHGAPSLVLKASSSPIIVDDLVLVGFSDGKLDALELQTGRLIWQRSIAYGTGASDVERLVDIDSDPIISNNVAYLATYQGYVGALSLSNGQFIWRKPASVYKNMLLSHNNLYFTDSNDVLWSLNSSTGQVNWKQTSLKARGLTAPALVGGNLAVGDKTGYLHILSTQTGELLGRSQLSGGVTVSPSVSGKNMYVLTNNGMLNQLSVS.

The N-terminal stretch at 1–16 (MKIRILVLILCALTQG) is a signal peptide. Cys17 carries the N-palmitoyl cysteine lipid modification. Residue Cys17 is the site of S-diacylglycerol cysteine attachment.

Belongs to the BamB family. As to quaternary structure, part of the Bam complex.

Its subcellular location is the cell outer membrane. Functionally, part of the outer membrane protein assembly complex, which is involved in assembly and insertion of beta-barrel proteins into the outer membrane. In Legionella pneumophila (strain Paris), this protein is Outer membrane protein assembly factor BamB.